A 521-amino-acid polypeptide reads, in one-letter code: Maturase K (521 aa).

Belongs to the intron maturase 2 family. MatK subfamily.

It is found in the plastid. Its function is as follows. Usually encoded in the trnK tRNA gene intron. Probably assists in splicing its own and other chloroplast group II introns. This is Maturase K from Cuscuta exaltata (Tall dodder).